Consider the following 450-residue polypeptide: Tubulin alpha chain (450 aa).

Residue Q11 participates in GTP binding. K40 carries the N6-acetyllysine modification. The GTP site is built by E71, S140, G144, T145, T179, N206, and N228. E71 is a Mg(2+) binding site. The active site involves E254. A disordered region spans residues D431–Y450.

Belongs to the tubulin family. Dimer of alpha and beta chains. A typical microtubule is a hollow water-filled tube with an outer diameter of 25 nm and an inner diameter of 15 nM. Alpha-beta heterodimers associate head-to-tail to form protofilaments running lengthwise along the microtubule wall with the beta-tubulin subunit facing the microtubule plus end conferring a structural polarity. Microtubules usually have 13 protofilaments but different protofilament numbers can be found in some organisms and specialized cells. Requires Mg(2+) as cofactor. Some glutamate residues at the C-terminus are polyglycylated, resulting in polyglycine chains on the gamma-carboxyl group. Glycylation is mainly limited to tubulin incorporated into axonemes (cilia and flagella) whereas glutamylation is prevalent in neuronal cells, centrioles, axonemes, and the mitotic spindle. Both modifications can coexist on the same protein on adjacent residues, and lowering polyglycylation levels increases polyglutamylation, and reciprocally. The precise function of polyglycylation is still unclear. Post-translationally, some glutamate residues at the C-terminus are polyglutamylated, resulting in polyglutamate chains on the gamma-carboxyl group. Polyglutamylation plays a key role in microtubule severing by spastin (SPAST). SPAST preferentially recognizes and acts on microtubules decorated with short polyglutamate tails: severing activity by SPAST increases as the number of glutamates per tubulin rises from one to eight, but decreases beyond this glutamylation threshold. In terms of processing, acetylation of alpha chains at Lys-40 is located inside the microtubule lumen. This modification has been correlated with increased microtubule stability, intracellular transport and ciliary assembly. Undergoes a tyrosination/detyrosination cycle, the cyclic removal and re-addition of a C-terminal tyrosine residue by the enzymes tubulin tyrosine carboxypeptidase (MATCAP, VASH1 or VASH2) and tubulin tyrosine ligase (TTL), respectively. Post-translationally, tyrosination promotes microtubule interaction with CAP-Gly microtubule plus-end tracking proteins. Tyrosinated tubulins regulate the initiation of dynein-driven motility. In terms of processing, detyrosination is involved in metaphase plate congression by guiding chromosomes during mitosis. Detyrosination increases microtubules-dependent mechanotransduction in dystrophic cardiac and skeletal muscle. In cardiomyocytes, detyrosinated microtubules are required to resist to contractile compression during contraction.

The protein localises to the cytoplasm. It localises to the cytoskeleton. The enzyme catalyses GTP + H2O = GDP + phosphate + H(+). In terms of biological role, tubulin is the major constituent of microtubules, a cylinder consisting of laterally associated linear protofilaments composed of alpha- and beta-tubulin heterodimers. Microtubules grow by the addition of GTP-tubulin dimers to the microtubule end, where a stabilizing cap forms. Below the cap, tubulin dimers are in GDP-bound state, owing to GTPase activity of alpha-tubulin. This is Tubulin alpha chain from Oncorhynchus keta (Chum salmon).